A 531-amino-acid polypeptide reads, in one-letter code: Acetate CoA-transferase YdiF (531 aa).

The active-site 5-glutamyl coenzyme A thioester intermediate is E333.

It belongs to the 3-oxoacid CoA-transferase family. In terms of assembly, homotetramer; dimer of dimers.

It carries out the reaction an acyl-CoA + acetate = a carboxylate + acetyl-CoA. Functionally, coA transferase having broad substrate specificity for short-chain acyl-CoA thioesters with the activity decreasing when the length of the carboxylic acid chain exceeds four carbons. Exhibits high activity with acetoacetyl-CoA, propionyl-CoA, crotonoyl-CoA or butyryl-CoA as donors, with acetate as an acceptor. When acetyl-CoA is used as the donor, propionate, acetoacetate, butyrate, isobutyrate, and 4-hydroxybutyrate can be utilized as acceptors but not isovalerate. May play a role in short-chain fatty acid metabolism in E.coli. The chain is Acetate CoA-transferase YdiF from Escherichia coli O157:H7.